The sequence spans 564 residues: Type 2 DNA topoisomerase 6 subunit B (564 aa).

Residues Asn46, Asp78, 99–100 (TK), 109–116 (GQQGIGIS), and Lys471 each bind ATP.

It belongs to the TOP6B family. Homodimer. Heterotetramer of two Top6A and two Top6B chains.

It catalyses the reaction ATP-dependent breakage, passage and rejoining of double-stranded DNA.. Functionally, relaxes both positive and negative superturns and exhibits a strong decatenase activity. The chain is Type 2 DNA topoisomerase 6 subunit B from Pyrococcus horikoshii (strain ATCC 700860 / DSM 12428 / JCM 9974 / NBRC 100139 / OT-3).